Reading from the N-terminus, the 449-residue chain is Hyaluronidase (449 aa).

A signal peptide spans 1–23; the sequence is MYHLWIKCLAAWIFLKRFNGVHV. Disulfide bonds link Cys-47/Cys-340 and Cys-211/Cys-227. Residues Asn-67 and Asn-103 are each glycosylated (N-linked (GlcNAc...) asparagine). Glu-135 serves as the catalytic Proton donor. N-linked (GlcNAc...) asparagine glycosylation occurs at Asn-153. N-linked (GlcNAc...) asparagine glycosylation is present at Asn-357. Cystine bridges form between Cys-365-Cys-376, Cys-370-Cys-427, and Cys-429-Cys-438. A glycan (N-linked (GlcNAc...) asparagine) is linked at Asn-401. In terms of domain architecture, EGF-like spans 427 to 438; the sequence is CQCYQGWQGLYC.

Belongs to the glycosyl hydrolase 56 family. In terms of assembly, monomer. Expressed by the venom gland.

Its subcellular location is the secreted. The enzyme catalyses Random hydrolysis of (1-&gt;4)-linkages between N-acetyl-beta-D-glucosamine and D-glucuronate residues in hyaluronate.. In terms of biological role, snake venom endo-hyaluronidase that degrades hyaluronan to smaller oligosaccharide fragments. In venom, it is not toxic by itself, but increases the diffusion of other venom proteins by degrading the extracellular matrix. In addition, it displays antiedematogenic activity. In Echis ocellatus (Ocellated saw-scaled viper), this protein is Hyaluronidase.